We begin with the raw amino-acid sequence, 342 residues long: Methylthioribose-1-phosphate isomerase (342 aa).

Residues Arg-49–Ala-51, Arg-86, and Gln-187 each bind substrate. The Proton donor role is filled by Asp-228. Asn-238–Lys-239 contributes to the substrate binding site.

Belongs to the eIF-2B alpha/beta/delta subunits family. MtnA subfamily.

The catalysed reaction is 5-(methylsulfanyl)-alpha-D-ribose 1-phosphate = 5-(methylsulfanyl)-D-ribulose 1-phosphate. The protein operates within amino-acid biosynthesis; L-methionine biosynthesis via salvage pathway; L-methionine from S-methyl-5-thio-alpha-D-ribose 1-phosphate: step 1/6. Catalyzes the interconversion of methylthioribose-1-phosphate (MTR-1-P) into methylthioribulose-1-phosphate (MTRu-1-P). In Citrobacter koseri (strain ATCC BAA-895 / CDC 4225-83 / SGSC4696), this protein is Methylthioribose-1-phosphate isomerase.